We begin with the raw amino-acid sequence, 249 residues long: uncharacterized protein (249 aa).

Residue 7–14 coordinates ATP; sequence GKGGCGKS.

This is an uncharacterized protein from Methanocaldococcus jannaschii (strain ATCC 43067 / DSM 2661 / JAL-1 / JCM 10045 / NBRC 100440) (Methanococcus jannaschii).